The sequence spans 251 residues: uncharacterized protein (251 aa).

Disordered regions lie at residues methionine 1 to alanine 92 and lysine 137 to histidine 251. Over residues alanine 69–alanine 92 the composition is skewed to low complexity. Residues serine 155 to serine 172 are compositionally biased toward polar residues.

This is an uncharacterized protein from Homo sapiens (Human).